Consider the following 1750-residue polypeptide: Protein TIC 214 (1750 aa).

The next 6 helical transmembrane spans lie at 12-32 (KIINSVIVVGLYYGFMTALSI), 69-89 (FIMGQFIRLISIYYGPLYVAL), 97-117 (ILALPYLLIHLFWNTDKSFFA), 129-149 (LEIYCVFLNHFALQLLNSCIL), 177-197 (FAWFIGQLFILNCFELVLVWI), and 216-236 (IFVIFLNCIFGSLLFLLSIQC). The segment covering 260–277 (RERLQKEEERGVEKKEQS) has biased composition (basic and acidic residues). Disordered regions lie at residues 260 to 282 (RERLQKEEERGVEKKEQSTEEDP), 617 to 638 (ATTTNSKTNTTKDTNLETKKES), 718 to 738 (STDKKRGKTKKEEKRENKQRE), 1205 to 1225 (RNSRGNYRLSDSKKQNVPKPV), and 1419 to 1512 (ETDS…NKKE). The span at 617 to 629 (ATTTNSKTNTTKD) shows a compositional bias: low complexity. The span at 727-738 (KKEEKRENKQRE) shows a compositional bias: basic and acidic residues. The span at 1420–1512 (TDSKQKSETD…TKSDKKNKKE (93 aa)) shows a compositional bias: basic and acidic residues.

This sequence belongs to the TIC214 family. As to quaternary structure, part of the Tic complex.

It is found in the plastid. The protein localises to the chloroplast inner membrane. Its function is as follows. Involved in protein precursor import into chloroplasts. May be part of an intermediate translocation complex acting as a protein-conducting channel at the inner envelope. The chain is Protein TIC 214 from Cuscuta reflexa (Southern Asian dodder).